The sequence spans 383 residues: Putative protein FAM157A (383 aa).

Disordered stretches follow at residues 1–21 (MGPL…PLPK) and 177–254 (ATAR…PLGR).

Belongs to the FAM157 family.

The protein is Putative protein FAM157A (FAM157A) of Homo sapiens (Human).